The sequence spans 249 residues: uncharacterized protein (249 aa).

Over residues 51 to 67 (IPKDSLTNGKSSKNCMS) the composition is skewed to polar residues. Disordered stretches follow at residues 51–131 (IPKD…DSPV) and 205–240 (YLNA…SSDG). Residues 93–106 (SFQSMNSSMSSSTQ) show a composition bias toward low complexity. The segment covering 110–129 (RILDEKNKDQSSSNENDRDS) has biased composition (basic and acidic residues).

It belongs to the asfivirus DP238L family.

This is an uncharacterized protein from African swine fever virus (isolate Tick/Malawi/Lil 20-1/1983) (ASFV).